The sequence spans 362 residues: Ribosome-binding ATPase YchF (362 aa).

The 257-residue stretch at 2–258 (LSAGIVGLPN…LDANGRQDWL (257 aa)) folds into the OBG-type G domain. Position 11–16 (11–16 (NVGKST)) interacts with ATP. Mg(2+)-binding residues include Ser15 and Thr35. One can recognise a TGS domain in the interval 281 to 347 (GLWSFFTFGK…EAKKQGLVRL (67 aa)).

This sequence belongs to the TRAFAC class OBG-HflX-like GTPase superfamily. OBG GTPase family. YchF/OLA1 subfamily. The cofactor is Mg(2+).

ATPase that binds to both the 70S ribosome and the 50S ribosomal subunit in a nucleotide-independent manner. This is Ribosome-binding ATPase YchF from Mycoplasma pneumoniae (strain ATCC 29342 / M129 / Subtype 1) (Mycoplasmoides pneumoniae).